The chain runs to 201 residues: Adenylyl-sulfate kinase (201 aa).

35-42 (GLSGSGKS) provides a ligand contact to ATP. Serine 109 serves as the catalytic Phosphoserine intermediate.

It belongs to the APS kinase family.

The catalysed reaction is adenosine 5'-phosphosulfate + ATP = 3'-phosphoadenylyl sulfate + ADP + H(+). It functions in the pathway sulfur metabolism; hydrogen sulfide biosynthesis; sulfite from sulfate: step 2/3. Functionally, catalyzes the synthesis of activated sulfate. In Salmonella paratyphi C (strain RKS4594), this protein is Adenylyl-sulfate kinase.